The chain runs to 132 residues: Transmembrane protein 170B (132 aa).

The Extracellular segment spans residues M1–W37. N-linked (GlcNAc...) asparagine glycosylation occurs at N12. The chain crosses the membrane as a helical span at residues I38–F58. The Cytoplasmic portion of the chain corresponds to V59–R68. Residues V69–T89 form a helical membrane-spanning segment. At S90 to M104 the chain is on the extracellular side. A helical membrane pass occupies residues A105 to F125. At S126–L132 the chain is on the cytoplasmic side.

This sequence belongs to the TMEM170 family. In terms of assembly, interacts with CTNNB1. In terms of tissue distribution, expressed in normal breast tissues. Down-regulated in breast cancer cells (at protein level).

The protein localises to the cell membrane. In terms of biological role, negatively regulates the canonical Wnt signaling in breast cancer cells. Exerts an inhibitory effect on breast cancer growth by inhibiting CTNNB1 stabilization and nucleus translocation, which reduces the activity of Wnt targets. In Homo sapiens (Human), this protein is Transmembrane protein 170B (TMEM170B).